The chain runs to 680 residues: DNA-directed RNA polymerase subunit beta' (680 aa).

Zn(2+)-binding residues include Cys-69, Cys-71, Cys-87, and Cys-90. 3 residues coordinate Mg(2+): Asp-489, Asp-491, and Asp-493.

The protein belongs to the RNA polymerase beta' chain family. RpoC1 subfamily. In terms of assembly, in plastids the minimal PEP RNA polymerase catalytic core is composed of four subunits: alpha, beta, beta', and beta''. When a (nuclear-encoded) sigma factor is associated with the core the holoenzyme is formed, which can initiate transcription. It depends on Mg(2+) as a cofactor. Requires Zn(2+) as cofactor.

It localises to the plastid. Its subcellular location is the chloroplast. It carries out the reaction RNA(n) + a ribonucleoside 5'-triphosphate = RNA(n+1) + diphosphate. Its function is as follows. DNA-dependent RNA polymerase catalyzes the transcription of DNA into RNA using the four ribonucleoside triphosphates as substrates. This is DNA-directed RNA polymerase subunit beta' from Arabis hirsuta (Hairy rock-cress).